The following is a 281-amino-acid chain: Proteasome subunit beta (281 aa).

A propeptide spans 1 to 53 (MEANTRSTGRLPAAFLTPGSSSFMDFLGEHQPEMLPGNRQLPPVQGVIEAPHG) (removed in mature form; by autocatalysis). Catalysis depends on Thr54, which acts as the Nucleophile.

This sequence belongs to the peptidase T1B family. As to quaternary structure, the 20S proteasome core is composed of 14 alpha and 14 beta subunits that assemble into four stacked heptameric rings, resulting in a barrel-shaped structure. The two inner rings, each composed of seven catalytic beta subunits, are sandwiched by two outer rings, each composed of seven alpha subunits. The catalytic chamber with the active sites is on the inside of the barrel. Has probably a gated structure, the ends of the cylinder being occluded by the N-termini of the alpha-subunits. Is likely capped by the proteasome-associated ATPase, ARC.

It is found in the cytoplasm. It catalyses the reaction Cleavage of peptide bonds with very broad specificity.. It participates in protein degradation; proteasomal Pup-dependent pathway. The formation of the proteasomal ATPase ARC-20S proteasome complex, likely via the docking of the C-termini of ARC into the intersubunit pockets in the alpha-rings, may trigger opening of the gate for substrate entry. Interconversion between the open-gate and close-gate conformations leads to a dynamic regulation of the 20S proteasome proteolysis activity. Peptidolytic activity is completely inhibited by lactacystin, and to a lesser extent, by N-acetyl-Leu-Leu-norleucinal (Ac-LLnL) and benzoyloxycarbonyl-Leu-Leu-Leu-vinylsulfone (Z-LLL-VS) in vitro. Its function is as follows. Component of the proteasome core, a large protease complex with broad specificity involved in protein degradation. The S.coelicolor proteasome is able to cleave oligopeptides after hydrophobic residues, but not after basic or acidic residues, thus displaying chymotrypsin-like activity but not trypsin-like activity. The sequence is that of Proteasome subunit beta from Streptomyces coelicolor (strain ATCC BAA-471 / A3(2) / M145).